The following is a 580-amino-acid chain: NADH-ubiquinone oxidoreductase chain 5 (580 aa).

The next 16 membrane-spanning stretches (helical) occupy residues 12–32 (FYFL…FLLM), 50–70 (IVMT…VLLI), 92–112 (ILLV…PNLI), 113–133 (SILL…IYFQ), 153–173 (VALL…YIFY), 183–203 (MMII…QIPF), 215–235 (TPVS…YLLI), 244–264 (WWMA…AGLG), 274–293 (IIAL…LSMG), 298–320 (AFFH…GSII), 343–363 (CSCF…AGFY), 367–387 (LILE…LFFF), 427–447 (ICFL…LMFL), 463–483 (LFVC…KLFF), 496–516 (FVGS…NYPL), and 560–580 (IYLL…VLVN).

The protein belongs to the complex I subunit 5 family.

It localises to the mitochondrion inner membrane. The enzyme catalyses a ubiquinone + NADH + 5 H(+)(in) = a ubiquinol + NAD(+) + 4 H(+)(out). In terms of biological role, core subunit of the mitochondrial membrane respiratory chain NADH dehydrogenase (Complex I) that is believed to belong to the minimal assembly required for catalysis. Complex I functions in the transfer of electrons from NADH to the respiratory chain. The immediate electron acceptor for the enzyme is believed to be ubiquinone. This Anopheles gambiae (African malaria mosquito) protein is NADH-ubiquinone oxidoreductase chain 5 (mt:ND5).